Here is a 230-residue protein sequence, read N- to C-terminus: MEGQRWLPLEANPEVTNQFLKQLGLHPNWQFVDVYGMDPELLSMVPRPVCAVLLLFPITEKYEVFRTEEEEKIKSQGQDVTSSVYFMKQTISNACGTIGLIHAIANNKDKMHFESGSTLKKFLEESASMSPEERARYLENYDAIRVTHETSAHEGQTEAPNIDEKVDLHFIALVHVDGHLYELDGRKPFPINHGETSDETLLEDAIEVCKKFMERDPDELRFNAIALSAA.

The UCH catalytic domain maps to 5 to 229; sequence RWLPLEANPE…LRFNAIALSA (225 aa). Positions 8–13 are interaction with ubiquitin; sequence PLEANP. Cys95 (nucleophile) is an active-site residue. Ser130 is subject to Phosphoserine. The interval 152 to 159 is interaction with ubiquitin. Crossover loop which restricts access of large ubiquitin adducts to the active site; it reads AHEGQTEA. Catalysis depends on His169, which acts as the Proton donor. Positions 219–224 are interaction with ubiquitin; that stretch reads ELRFNA.

Belongs to the peptidase C12 family. As to quaternary structure, preferentially binds diubiquitin; the interaction does not hydrolyze diubiquitin but, in vitro, inhibits the hydrolyzing activity on other substrates.

It is found in the cytoplasm. It catalyses the reaction Thiol-dependent hydrolysis of ester, thioester, amide, peptide and isopeptide bonds formed by the C-terminal Gly of ubiquitin (a 76-residue protein attached to proteins as an intracellular targeting signal).. With respect to regulation, inhibited by monoubiquitin and diubiquitin. Functionally, deubiquitinating enzyme (DUB) that controls levels of cellular ubiquitin through processing of ubiquitin precursors and ubiquitinated proteins. Thiol protease that recognizes and hydrolyzes a peptide bond at the C-terminal glycine of either ubiquitin or NEDD8. Has a 10-fold preference for Arg and Lys at position P3''. Deubiquitinates ENAC in apical compartments, thereby regulating apical membrane recycling. Indirectly increases the phosphorylation of IGFIR, AKT and FOXO1 and promotes insulin-signaling and insulin-induced adipogenesis. Required for stress-response retinal, skeletal muscle and germ cell maintenance. May be involved in working memory. Can hydrolyze UBB(+1), a mutated form of ubiquitin which is not effectively degraded by the proteasome. The polypeptide is Ubiquitin carboxyl-terminal hydrolase isozyme L3 (UCHL3) (Bos taurus (Bovine)).